We begin with the raw amino-acid sequence, 331 residues long: Probable transcriptional regulatory protein At2g25830 (331 aa).

Belongs to the TACO1 family.

This chain is Probable transcriptional regulatory protein At2g25830, found in Arabidopsis thaliana (Mouse-ear cress).